A 425-amino-acid chain; its full sequence is Serine--tRNA ligase 1 (425 aa).

Residue 230 to 232 participates in L-serine binding; sequence TSE. ATP contacts are provided by residues 261 to 263 and valine 277; that span reads RRE. Glutamate 284 contributes to the L-serine binding site. Residue 348 to 351 coordinates ATP; that stretch reads ELTS. Threonine 382 provides a ligand contact to L-serine.

This sequence belongs to the class-II aminoacyl-tRNA synthetase family. Type-1 seryl-tRNA synthetase subfamily. As to quaternary structure, homodimer. The tRNA molecule binds across the dimer.

It is found in the cytoplasm. It catalyses the reaction tRNA(Ser) + L-serine + ATP = L-seryl-tRNA(Ser) + AMP + diphosphate + H(+). The catalysed reaction is tRNA(Sec) + L-serine + ATP = L-seryl-tRNA(Sec) + AMP + diphosphate + H(+). It participates in aminoacyl-tRNA biosynthesis; selenocysteinyl-tRNA(Sec) biosynthesis; L-seryl-tRNA(Sec) from L-serine and tRNA(Sec): step 1/1. Functionally, catalyzes the attachment of serine to tRNA(Ser). Is also able to aminoacylate tRNA(Sec) with serine, to form the misacylated tRNA L-seryl-tRNA(Sec), which will be further converted into selenocysteinyl-tRNA(Sec). This chain is Serine--tRNA ligase 1, found in Streptomyces avermitilis (strain ATCC 31267 / DSM 46492 / JCM 5070 / NBRC 14893 / NCIMB 12804 / NRRL 8165 / MA-4680).